The following is a 302-amino-acid chain: Putative thiol protease R355 (302 aa).

Catalysis depends on residues H182 and D199. The active-site Nucleophile is C244.

It belongs to the peptidase C48 family.

The protein resides in the virion. The protein is Putative thiol protease R355 of Acanthamoeba polyphaga mimivirus (APMV).